Reading from the N-terminus, the 100-residue chain is uncharacterized protein (100 aa).

In terms of assembly, may interact with ribosomes.

This is an uncharacterized protein from Saccharomyces cerevisiae (strain ATCC 204508 / S288c) (Baker's yeast).